The chain runs to 83 residues: Three-finger toxin MALT0052C (83 aa).

The first 21 residues, 1 to 21 (MKTLLLTLVVVTIVCLDFGHT), serve as a signal peptide directing secretion. 4 disulfides stabilise this stretch: Cys-24-Cys-45, Cys-38-Cys-62, Cys-64-Cys-75, and Cys-76-Cys-81.

The protein belongs to the three-finger toxin family. Short-chain subfamily. Type I alpha-neurotoxin sub-subfamily. In terms of tissue distribution, expressed by the venom gland.

The protein localises to the secreted. Its function is as follows. Binds to muscle nicotinic acetylcholine receptor (nAChR) and inhibit acetylcholine from binding to the receptor, thereby impairing neuromuscular transmission. The chain is Three-finger toxin MALT0052C from Micrurus altirostris (Uruguayan coral snake).